Consider the following 542-residue polypeptide: Prolyl 3-hydroxylase OGFOD1 (542 aa).

In terms of domain architecture, Fe2OG dioxygenase spans 134–239 (DLESTIDMSC…RLSISGWFHG (106 aa)). Residues H155 and D157 each contribute to the Fe cation site. Residue Y169 participates in 2-oxoglutarate binding. H218 is a binding site for Fe cation. R230 contributes to the 2-oxoglutarate binding site. Residues 371–435 (SEDEPEDKKE…AKKESSVPTC (65 aa)) are disordered. A compositionally biased stretch (polar residues) spans 395–417 (SHSSSEPENSWAATSDSSLQSEG).

Belongs to the TPA1 family. In terms of assembly, monomer. It depends on Fe(2+) as a cofactor. The cofactor is L-ascorbate.

The protein resides in the cytoplasm. It is found in the nucleus. It carries out the reaction [ribosomal protein uS12]-L-proline + 2-oxoglutarate + O2 = [ribosomal protein uS12]-(3S)-3-hydroxy-L-proline + succinate + CO2. Its function is as follows. Prolyl 3-hydroxylase that catalyzes 3-hydroxylation of 'Pro-62' of small ribosomal subunit uS12 (RPS23), thereby regulating protein translation termination efficiency. Involved in stress granule formation. The polypeptide is Prolyl 3-hydroxylase OGFOD1 (OGFOD1) (Bos taurus (Bovine)).